Consider the following 236-residue polypeptide: Probable metal transport system ATP-binding protein TC_0697 (236 aa).

Residues 5-236 (LILENVSFRY…FCCNTFGKCS (232 aa)) enclose the ABC transporter domain. Residue 39 to 46 (GPNGGGKT) participates in ATP binding.

Belongs to the ABC transporter superfamily.

The protein resides in the cell inner membrane. Part of an ATP-driven transport system TC_0696/TC_0697/TC_0698 for a metal. Probably responsible for energy coupling to the transport system. This is Probable metal transport system ATP-binding protein TC_0697 from Chlamydia muridarum (strain MoPn / Nigg).